A 214-amino-acid chain; its full sequence is Putative 3-methyladenine DNA glycosylase (214 aa).

The protein belongs to the DNA glycosylase MPG family.

This is Putative 3-methyladenine DNA glycosylase from Gloeobacter violaceus (strain ATCC 29082 / PCC 7421).